We begin with the raw amino-acid sequence, 429 residues long: Enolase (429 aa).

A (2R)-2-phosphoglycerate-binding site is contributed by Q163. E205 (proton donor) is an active-site residue. Mg(2+) is bound by residues D242, E287, and D314. K339, R368, S369, and K390 together coordinate (2R)-2-phosphoglycerate. Catalysis depends on K339, which acts as the Proton acceptor.

The protein belongs to the enolase family. The cofactor is Mg(2+).

Its subcellular location is the cytoplasm. The protein resides in the secreted. The protein localises to the cell surface. It catalyses the reaction (2R)-2-phosphoglycerate = phosphoenolpyruvate + H2O. Its pathway is carbohydrate degradation; glycolysis; pyruvate from D-glyceraldehyde 3-phosphate: step 4/5. Catalyzes the reversible conversion of 2-phosphoglycerate (2-PG) into phosphoenolpyruvate (PEP). It is essential for the degradation of carbohydrates via glycolysis. This chain is Enolase, found in Magnetococcus marinus (strain ATCC BAA-1437 / JCM 17883 / MC-1).